Consider the following 192-residue polypeptide: Cysteine and glycine-rich protein 1 (192 aa).

The region spanning 10–61 (CGVCQKAVYFAEEVQCEGSSFHKSCFLCMVCKKNLDSTTVAVHGDEIYCKSC) is the LIM zinc-binding 1 domain. Residues 64 to 69 (KKYGPK) carry the Nuclear localization signal motif. Residues 118-169 (CPRCGQAVYAAEKVIGAGKSWHKSCFRCAKCGKSLESTTLADKDGEIYCKGC) enclose the LIM zinc-binding 2 domain.

Probable monomer. Interacts with ZYX. In terms of tissue distribution, most prominent in tissues that are enriched in smooth muscle cells, such as gizzard, stomach, and intestine. Lower level in the heart, no expression in liver, skeletal muscle, or brain.

It localises to the nucleus. It is found in the cytoplasm. The protein localises to the cytoskeleton. Functionally, heat stable protein, that interacts with zyxin/ZYX. May be a component of a signal transduction pathway that mediates adhesion-stimulated changes in gene expression. This Gallus gallus (Chicken) protein is Cysteine and glycine-rich protein 1 (CSRP1).